A 583-amino-acid chain; its full sequence is Interactor of constitutive active ROPs 2, chloroplastic (583 aa).

Residues Met-1–Val-55 constitute a chloroplast transit peptide. Disordered stretches follow at residues Met-1–Ala-80 and Glu-101–Glu-125. Residues Ser-34 to Pro-52 are compositionally biased toward polar residues. Coiled-coil stretches lie at residues Gly-74–Glu-207 and Met-238–Thr-516. Residues Ala-102 to Lys-115 show a composition bias toward basic and acidic residues. The segment at Leu-518–Lys-583 is disordered. The span at Ser-519–Gly-529 shows a compositional bias: low complexity. Residue Ser-540 is modified to Phosphoserine.

Belongs to the ICR family. As to quaternary structure, interacts with ARAC8, ARAC11 and KIN13A in vitro, but not with ICR1 or SEC3A.

It is found in the plastid. The protein resides in the chloroplast. Functionally, acts as a scaffold, mediating interaction of ROPs with different proteins. The protein is Interactor of constitutive active ROPs 2, chloroplastic (ICR2) of Arabidopsis thaliana (Mouse-ear cress).